The following is a 111-amino-acid chain: UPF0060 membrane protein CPR_1507 (111 aa).

The next 4 helical transmembrane spans lie at 7-27 (IFYFLLAGVFEIGGGYLIWLW), 33-53 (SLIYGIIGALVLILYGIIPTL), 60-80 (FGRVYATYGGIFIVLSILCGW), and 85-105 (IIPDKFDLIGGFIALIGVLII).

It belongs to the UPF0060 family.

It is found in the cell membrane. This chain is UPF0060 membrane protein CPR_1507, found in Clostridium perfringens (strain SM101 / Type A).